The primary structure comprises 83 residues: Small ribosomal subunit protein uS17 (83 aa).

Belongs to the universal ribosomal protein uS17 family. Part of the 30S ribosomal subunit.

In terms of biological role, one of the primary rRNA binding proteins, it binds specifically to the 5'-end of 16S ribosomal RNA. The sequence is that of Small ribosomal subunit protein uS17 from Francisella philomiragia subsp. philomiragia (strain ATCC 25017 / CCUG 19701 / FSC 153 / O#319-036).